Consider the following 362-residue polypeptide: MTNKTVLHAKHLASGAKMVDFFGWDMPINYGSQIEEHHAVRTDAGMFDVSHMTIVDVQGADAKAFLRRLVINDVAKLATPGKALYTGMLNEEGGVIDDLIIYFFSDTDYRLVVNSATRVKDLAWMTKQSTGFDITITERPEFGMLAVQGPEAKAKVAKLLTAEQIEAVEGMKPFFGVQVGDLFIATTGYTGEDGYEIIVPNNSAEDFWQKLLDEGVVPCGLGARDTLRLEAGMNLYGLDMDETVSPLAANMAWTISWEPTDRDFIGRDVLTAQKAAGDQPKLVGLVLEAKGVLRSHQVVVTEFGNGEITSGTFSPTLGHSVALARVPRSVKVGDTIEVEMRKKLIKVQVTKPSFVRNGKKVF.

It belongs to the GcvT family. As to quaternary structure, the glycine cleavage system is composed of four proteins: P, T, L and H.

The enzyme catalyses N(6)-[(R)-S(8)-aminomethyldihydrolipoyl]-L-lysyl-[protein] + (6S)-5,6,7,8-tetrahydrofolate = N(6)-[(R)-dihydrolipoyl]-L-lysyl-[protein] + (6R)-5,10-methylene-5,6,7,8-tetrahydrofolate + NH4(+). In terms of biological role, the glycine cleavage system catalyzes the degradation of glycine. The sequence is that of Aminomethyltransferase from Colwellia psychrerythraea (strain 34H / ATCC BAA-681) (Vibrio psychroerythus).